The primary structure comprises 310 residues: Putative type II methyltransferase M.MJ0563P (310 aa).

The SAM-dependent MTase C5-type domain occupies 1–310; that stretch reads MNVIDLFSGC…AIAKEIKKQL (310 aa). Cysteine 77 is a catalytic residue.

This sequence belongs to the class I-like SAM-binding methyltransferase superfamily. C5-methyltransferase family.

It carries out the reaction a 2'-deoxycytidine in DNA + S-adenosyl-L-methionine = a 5-methyl-2'-deoxycytidine in DNA + S-adenosyl-L-homocysteine + H(+). Functionally, a putative methylase that may protect DNA from cleavage by an unknown endonuclease. The chain is Putative type II methyltransferase M.MJ0563P from Methanocaldococcus jannaschii (strain ATCC 43067 / DSM 2661 / JAL-1 / JCM 10045 / NBRC 100440) (Methanococcus jannaschii).